A 455-amino-acid polypeptide reads, in one-letter code: Retinoic acid receptor beta (455 aa).

The segment at 1 to 87 is modulating; sequence MTTSSRTCPV…PLPPPRVYKP (87 aa). The segment at 44–78 is disordered; the sequence is LQSHPPTSGCSTPSPATVETQSTSSEELVPSPPSP. A compositionally biased stretch (polar residues) spans 47–66; it reads HPPTSGCSTPSPATVETQST. NR C4-type zinc fingers lie at residues 88–108 and 124–148; these read CFVC…CEGC and CHRD…LQKC. Positions 88-153 form a DNA-binding region, nuclear receptor; it reads CFVCQDKSSG…RLQKCFEVGM (66 aa). The hinge stretch occupies residues 154 to 182; sequence SKESVRNDRNKKKKEPTKQESTENYEMTA. Positions 183-417 constitute an NR LBD domain; sequence ELDDLTEKIR…PLIQEMLENS (235 aa). Residues 416–455 form a disordered region; that stretch reads NSEGHEPLTPTSNGNTAEHSPSISPSSVDNSSVSQSPMVQ. Residues 424–434 show a composition bias toward polar residues; that stretch reads TPTSNGNTAEH. Residues 435–455 show a composition bias toward low complexity; that stretch reads SPSISPSSVDNSSVSQSPMVQ.

This sequence belongs to the nuclear hormone receptor family. NR1 subfamily. Heterodimer; with a RXR molecule. Binds DNA preferentially as a RAR/RXR heterodimer.

The protein resides in the nucleus. Functionally, receptor for retinoic acid. Retinoic acid receptors bind as heterodimers to their target response elements in response to their ligands, all-trans or 9-cis retinoic acid, and regulate gene expression in various biological processes. The RAR/RXR heterodimers bind to the retinoic acid response elements (RARE) composed of tandem 5'-AGGTCA-3' sites known as DR1-DR5. Required for limb and craniofacial development. The chain is Retinoic acid receptor beta (RARB) from Gallus gallus (Chicken).